A 218-amino-acid polypeptide reads, in one-letter code: Ras-related protein Rab-4A (218 aa).

9 residues coordinate GTP: Gly-23, Thr-24, Gly-25, Lys-26, Ser-27, Cys-28, Ser-42, His-44, and Thr-45. Mg(2+) is bound at residue Ser-27. The Switch 1 motif lies at 44–49 (HTIGVE). Positions 45 and 68 each coordinate Mg(2+). Positions 70–79 (AGQERFRSVT) match the Switch 2 motif. Gly-71 contacts GTP. Position 72 is a 5-glutamyl serotonin (Gln-72). GTP contacts are provided by Asn-126, Lys-127, Asp-129, Ala-157, and Leu-158. Phosphoserine is present on Ser-190. Ser-204 carries the phosphoserine; by CDK1 modification. Residues Cys-216 and Cys-218 are each lipidated (S-geranylgeranyl cysteine). The residue at position 218 (Cys-218) is a Cysteine methyl ester.

It belongs to the small GTPase superfamily. Rab family. In terms of assembly, interacts with RAB11FIP1, RABEP1, ZFYVE20 and RUFY1. Interacts with SGSM1, SGSM2 and SGSM3. Interacts (membrane-bound form) with NDRG1; the interaction involves NDRG1 in vesicular recycling of E-cadherin. Interacts (in GTP-bound form) with GRIPAP1. Interacts with RABEP1 and RBSN. Does not interact with HPS4. The cofactor is Mg(2+). Serotonylation of Gln-72 by TGM2 during activation and aggregation of platelets leads to constitutive activation of GTPase activity. In terms of processing, phosphorylated by CDK1 kinase during mitosis.

Its subcellular location is the membrane. The protein localises to the cytoplasm. The protein resides in the early endosome membrane. It localises to the recycling endosome membrane. It catalyses the reaction GTP + H2O = GDP + phosphate + H(+). Regulated by guanine nucleotide exchange factors (GEFs) which promote the exchange of bound GDP for free GTP. Regulated by GTPase activating proteins (GAPs) which increase the GTP hydrolysis activity. Inhibited by GDP dissociation inhibitors (GDIs). Functionally, the small GTPases Rab are key regulators of intracellular membrane trafficking, from the formation of transport vesicles to their fusion with membranes. Rabs cycle between an inactive GDP-bound form and an active GTP-bound form that is able to recruit to membranes different sets of downstream effectors directly responsible for vesicle formation, movement, tethering and fusion. RAB4A is involved in protein transport. Also plays a role in vesicular traffic. Mediates VEGFR2 endosomal trafficking to enhance VEGFR2 signaling. Acts as a regulator of platelet alpha-granule release during activation and aggregation of platelets. This chain is Ras-related protein Rab-4A (RAB4A), found in Bos taurus (Bovine).